A 1213-amino-acid chain; its full sequence is A disintegrin and metalloproteinase with thrombospondin motifs 2 (1213 aa).

Positions 1 to 28 are cleaved as a signal peptide; the sequence is MDPPAGAARRLLCPALLLLLLPPPPLLL. Residues 29–260 constitute a propeptide that is removed on maturation; the sequence is LPPPPASVRL…INSSRRRVRR (232 aa). N111 carries an N-linked (GlcNAc...) asparagine glycan. The interval 211 to 232 is disordered; the sequence is YRRPPTPKPPPVSEPQALDTGV. Residues 214-223 show a composition bias toward pro residues; sequence PPTPKPPPVS. The N-linked (GlcNAc...) asparagine glycan is linked to N252. The Peptidase M12B domain occupies 267–471; that stretch reads YNIEVLLGVD…HSYDCLRDDP (205 aa). 10 disulfides stabilise this stretch: C344–C393, C387–C466, C426–C452, C493–C518, C504–C527, C513–C546, C540–C551, C574–C611, C578–C616, and C589–C601. H409 serves as a coordination point for Zn(2+). The active site involves E410. The Zn(2+) site is built by H413 and H419. The 81-residue stretch at 480 to 560 folds into the Disintegrin domain; that stretch reads PQLPGLHYSM…CIWLTPDILK (81 aa). The 57-residue stretch at 561-617 folds into the TSP type-1 1 domain; that stretch reads RDGNWGAWTPFGSCSRTCGTGVKFRTRQCDNPHPANGGRTCSGLAYDFQLCNPQDCP. A Cell attachment site motif is present at residues 692–694; sequence RGD. The segment at 723-851 is spacer; the sequence is CKVVKGTFTR…LNVDDNNVLE (129 aa). TSP type-1 domains are found at residues 855–913, 915–975, and 976–1030; these read VRHE…NPQE, SQPV…NREL, and CPGR…APCP. Residues N949, N950, and N994 are each glycosylated (N-linked (GlcNAc...) asparagine). 3 cysteine pairs are disulfide-bonded: C988–C1024, C992–C1029, and C1003–C1013. N1032 carries N-linked (GlcNAc...) asparagine glycosylation. The PLAC domain maps to 1060–1098; the sequence is SKDQCQGDKSMFCRMEVLSRYCSIPSYNKLCCKSCNPPR. Residues N1099, N1147, and N1152 are each glycosylated (N-linked (GlcNAc...) asparagine).

In terms of assembly, may belong to a multimeric complex. Binds specifically to collagen type XIV. Requires Zn(2+) as cofactor. In terms of processing, the precursor is cleaved by a furin endopeptidase. Post-translationally, glycosylated. Can be O-fucosylated by POFUT2 on a serine or a threonine residue found within the consensus sequence C1-X(2)-(S/T)-C2-G of the TSP type-1 repeat domains where C1 and C2 are the first and second cysteine residue of the repeat, respectively. Fucosylated repeats can then be further glycosylated by the addition of a beta-1,3-glucose residue by the glucosyltransferase, B3GALTL. Fucosylation mediates the efficient secretion of ADAMTS family members. Can also be C-glycosylated with one or two mannose molecules on tryptophan residues within the consensus sequence W-X-X-W of the TPRs, and N-glycosylated. These other glycosylations can also facilitate secretion.

It localises to the secreted. Its subcellular location is the extracellular space. It is found in the extracellular matrix. The enzyme catalyses Cleaves the N-propeptide of collagen chain alpha1(I) at Pro-|-Gln and of alpha1(II) and alpha2(I) at Ala-|-Gln.. In terms of biological role, cleaves the propeptides of type I and II collagen prior to fibril assembly. Does not act on type III collagen. Cleaves lysyl oxidase LOX at a site downstream of its propeptide cleavage site to produce a short LOX form with reduced collagen-binding activity. This chain is A disintegrin and metalloproteinase with thrombospondin motifs 2 (Adamts2), found in Mus musculus (Mouse).